The primary structure comprises 122 residues: Large ribosomal subunit protein bL12 (122 aa).

The protein belongs to the bacterial ribosomal protein bL12 family. In terms of assembly, homodimer. Part of the ribosomal stalk of the 50S ribosomal subunit. Forms a multimeric L10(L12)X complex, where L10 forms an elongated spine to which 2 to 4 L12 dimers bind in a sequential fashion. Binds GTP-bound translation factors.

Forms part of the ribosomal stalk which helps the ribosome interact with GTP-bound translation factors. Is thus essential for accurate translation. In Actinobacillus succinogenes (strain ATCC 55618 / DSM 22257 / CCUG 43843 / 130Z), this protein is Large ribosomal subunit protein bL12.